A 200-amino-acid chain; its full sequence is COMM domain-containing protein 7 (200 aa).

Residues 133–200 (QLIDMEWKFG…RVRTSMECFC (68 aa)) form the COMM domain.

The protein belongs to the COMM domain-containing protein 7 family. As to quaternary structure, component of the commander complex consisting of the CCC subcomplex and the retriever subcomplex. Component of the CCC (COMMD/CCDC22/CCDC93) subcomplex consisting of COMMD1, COMMD2, COMMD3, COMMD4, COMMD5, COMMD6, COMMD7, COMMD8, COMMD9, COMMD10, CCDC22 and CCDC93; within the complex forms a heterodimer with COMMD9. Interacts with RELA. Interacts with CCDC22, CCDC93, SCNN1B, CUL7. In terms of tissue distribution, widely expressed with highest expression in lung.

It is found in the cytoplasmic vesicle. Functionally, scaffold protein in the commander complex that is essential for endosomal recycling of transmembrane cargos; the commander complex is composed of the CCC subcomplex and the retriever subcomplex. May modulate activity of cullin-RING E3 ubiquitin ligase (CRL) complexes. Associates with the NF-kappa-B complex and suppresses its transcriptional activity. In Homo sapiens (Human), this protein is COMM domain-containing protein 7 (COMMD7).